Reading from the N-terminus, the 79-residue chain is Putative sulfur carrier protein TM_0983 (79 aa).

Cys-17 acts as the Cysteine persulfide intermediate in catalysis.

This sequence belongs to the sulfur carrier protein TusA family.

In Thermotoga maritima (strain ATCC 43589 / DSM 3109 / JCM 10099 / NBRC 100826 / MSB8), this protein is Putative sulfur carrier protein TM_0983.